Here is a 290-residue protein sequence, read N- to C-terminus: ORF2/4 protein (290 aa).

Residues 67–218 are disordered; sequence LPAAPEAPGD…KSRYQPYLVT (152 aa). Over residues 121–130 the composition is skewed to basic and acidic residues; it reads RPQETQEGHR. Over residues 181-190 the composition is skewed to low complexity; that stretch reads AAQAAAAATA. The segment covering 191–200 has biased composition (polar residues); the sequence is NPGSQTQTPV.

This is ORF2/4 protein from Torque teno virus (isolate Human/Japan/TRM1/1999) (TTV).